An 841-amino-acid chain; its full sequence is Axin-1 (841 aa).

Residues 1 to 78 form a disordered region; sequence MNIQGKGFPL…GYEPEGSASP (78 aa). Residues 44 to 61 show a composition bias toward polar residues; it reads FYSSKSDAVRNETSTATP. The RGS domain maps to 88–211; that stretch reads SLHSLLDDQD…LKSDIYLEYT (124 aa). Residues 217-269 form a disordered region; that stretch reads SPKIYSDPSSGSGTGKGLPGYLPTLNEDEEWKCDQDTEPEASRDSAPSSRLTQ. Over residues 248 to 259 the composition is skewed to basic and acidic residues; that stretch reads KCDQDTEPEASR. An interaction with GSK3B region spans residues 348-433; the sequence is LRKQHRREMQ…DADISSGPSV (86 aa). The interaction with beta-catenin stretch occupies residues 434-508; sequence ISHKMPSAQP…RSPESGHLGK (75 aa). Disordered stretches follow at residues 482–527, 613–635, and 727–756; these read KTPG…TTKS, NIKK…SPED, and RRLE…SGAS. The span at 727-736 shows a compositional bias: basic and acidic residues; that stretch reads RRLEEEEKRA. The DIX domain occupies 759-841; sequence CENIVVAYYF…KIIGKVEKID (83 aa).

Homodimer. Post-translationally, ADP-ribosylated by tankyrase TNKS and TNKS2. Poly-ADP-ribosylated protein is recognized by RNF146, followed by ubiquitination at 'Lys-48' and subsequent activation of the Wnt signaling pathway. In terms of processing, ubiquitinated by RNF146 when poly-ADP-ribosylated, leading to its degradation and subsequent activation of the Wnt signaling pathway.

The protein resides in the cytoplasm. It is found in the nucleus. It localises to the membrane. The protein localises to the cell membrane. Its function is as follows. Component of the beta-catenin destruction complex required for regulating CTNNB1 levels through phosphorylation and ubiquitination, and modulating Wnt-signaling. Controls dorsoventral patterning via two opposing effects; down-regulates CTNNB1 to inhibit the Wnt signaling pathway and ventralize embryos, but also dorsalizes embryos by activating a Wnt-independent JNK signaling pathway. The polypeptide is Axin-1 (AXIN1) (Gallus gallus (Chicken)).